We begin with the raw amino-acid sequence, 367 residues long: Protein TlpB (367 aa).

Transmembrane regions (helical) follow at residues 15–35, 53–73, 83–103, 124–144, and 153–173; these read ILIS…SPYF, IIAP…GILI, IIPI…YVTF, IQAI…FFLL, and FYVV…LAPI.

It localises to the membrane. The protein is Protein TlpB (tlpB) of Flavobacterium psychrophilum.